The following is a 334-amino-acid chain: UL-16 binding protein 5 (334 aa).

The signal sequence occupies residues 1 to 25 (MAAAASPAFLLRLPLLLLLSSWCRT). The Extracellular segment spans residues 26 to 223 (GLADPHSLCY…TMSSGTAQPR (198 aa)). The segment at 29–117 (DPHSLCYDIT…IQLENYIPKE (89 aa)) is MHC class I alpha-1 like. A disulfide bridge links Cys50 with Cys66. An N-linked (GlcNAc...) asparagine glycan is attached at Asn82. Positions 118-210 (PLTLQARMSC…MDSTLEPSAG (93 aa)) are MHC class I alpha-2 like. The cysteines at positions 127 and 190 are disulfide-linked. Gly218 is lipidated: GPI-anchor amidated glycine. Residues 219 to 334 (TAQPRATATT…YSEPLQVSIS (116 aa)) constitute a propeptide, removed in mature form. Residues 224–243 (ATATTLILCCLLIMCLLICS) traverse the membrane as a helical segment. At 244 to 334 (RHSLTQSHGH…YSEPLQVSIS (91 aa)) the chain is on the cytoplasmic side.

This sequence belongs to the MHC class I family. Interacts with KLRK1/NKG2D. In terms of assembly, (Microbial infection) In CMV-infected cells, interacts with the viral glycoprotein UL16; this interaction causes RAET1G retention in the endoplasmic reticulum and cis-Golgi and prevents binding to and activation of KLRK1/NKG2D, providing CMV with an immune evasion mechanism. In terms of processing, the functional form is cleaved C-terminally of the GPI-anchor and yields a 28 kDa protein. In terms of tissue distribution, isoform 1 is highly expressed in colon and in a number of tumor cell lines and highly restricted in normal tissues. Both isoforms are frequently expressed in cell lines derived from epithelial cancers, and in primary breast cancers.

It is found in the cell membrane. It localises to the endoplasmic reticulum. Its subcellular location is the secreted. Functionally, binds and activates the KLRK1/NKG2D receptor, mediating natural killer cell cytotoxicity. Down-regulates the expression of KLRK1 and stimulates natural killer cells to secrete IFNG. In terms of biological role, stimulates natural killer cells to secrete IFNG. The chain is UL-16 binding protein 5 from Homo sapiens (Human).